The primary structure comprises 457 residues: Siroheme synthase (457 aa).

The precorrin-2 dehydrogenase /sirohydrochlorin ferrochelatase stretch occupies residues 1 to 204 (MDHLPIFCQL…ADEKAVNATT (204 aa)). NAD(+) is bound by residues 22 to 23 (DV) and 43 to 44 (LT). Residue S128 is modified to Phosphoserine. The segment at 216-457 (GEVVLVGAGP…RDKLNWFSSH (242 aa)) is uroporphyrinogen-III C-methyltransferase. P225 contacts S-adenosyl-L-methionine. D248 acts as the Proton acceptor in catalysis. The active-site Proton donor is the K270. S-adenosyl-L-methionine is bound by residues 301–303 (GGD), I306, 331–332 (TA), M382, and G411.

The protein in the N-terminal section; belongs to the precorrin-2 dehydrogenase / sirohydrochlorin ferrochelatase family. In the C-terminal section; belongs to the precorrin methyltransferase family.

It catalyses the reaction uroporphyrinogen III + 2 S-adenosyl-L-methionine = precorrin-2 + 2 S-adenosyl-L-homocysteine + H(+). The enzyme catalyses precorrin-2 + NAD(+) = sirohydrochlorin + NADH + 2 H(+). It carries out the reaction siroheme + 2 H(+) = sirohydrochlorin + Fe(2+). It functions in the pathway cofactor biosynthesis; adenosylcobalamin biosynthesis; precorrin-2 from uroporphyrinogen III: step 1/1. The protein operates within cofactor biosynthesis; adenosylcobalamin biosynthesis; sirohydrochlorin from precorrin-2: step 1/1. It participates in porphyrin-containing compound metabolism; siroheme biosynthesis; precorrin-2 from uroporphyrinogen III: step 1/1. Its pathway is porphyrin-containing compound metabolism; siroheme biosynthesis; siroheme from sirohydrochlorin: step 1/1. It functions in the pathway porphyrin-containing compound metabolism; siroheme biosynthesis; sirohydrochlorin from precorrin-2: step 1/1. Its function is as follows. Multifunctional enzyme that catalyzes the SAM-dependent methylations of uroporphyrinogen III at position C-2 and C-7 to form precorrin-2 via precorrin-1. Then it catalyzes the NAD-dependent ring dehydrogenation of precorrin-2 to yield sirohydrochlorin. Finally, it catalyzes the ferrochelation of sirohydrochlorin to yield siroheme. This chain is Siroheme synthase, found in Salmonella arizonae (strain ATCC BAA-731 / CDC346-86 / RSK2980).